The primary structure comprises 878 residues: Microtubule-associated protein homolog maph-1.1 (878 aa).

Disordered regions lie at residues 224–425 (ALSD…AQAT) and 456–518 (EIPP…PVVP). 4 stretches are compositionally biased toward low complexity: residues 241–268 (PSARPATTTGTATRPTRPAVPAASAPRA), 278–293 (SRPTTTRNAAPAPRTA), 310–321 (APTRAPVPARSA), and 328–339 (APAKPAANTAKA). Composition is skewed to basic and acidic residues over residues 416–425 (PPRHEVAQAT) and 480–496 (EEDKIPEPVDAFKKPDP).

It belongs to the MAP1A/MAP1B/MAP1S family. In terms of assembly, interacts with dlg-1.

The protein resides in the cell projection. It is found in the dendrite. Its subcellular location is the perikaryon. It localises to the axon. The protein localises to the cytoplasm. The protein resides in the cytoskeleton. The sequence is that of Microtubule-associated protein homolog maph-1.1 from Caenorhabditis elegans.